We begin with the raw amino-acid sequence, 477 residues long: Fibrinogen beta chain (477 aa).

Residues 1-76 form a disordered region; sequence EDLSLVGQPE…ASPRPQEAQK (76 aa). At Tyr13 the chain carries Sulfotyrosine. Residue Asn27 is glycosylated (N-linked (GlcNAc...) asparagine). The segment covering 44–55 has biased composition (basic residues); the sequence is RVRRPPLRHRRL. Cystine bridges form between Cys220/Cys304, Cys230/Cys259, and Cys412/Cys425. One can recognise a Fibrinogen C-terminal domain in the interval 221–476; that stretch reads RVPVVSGMHC…QMAMKLRPKW (256 aa).

In terms of assembly, heterohexamer; disulfide linked. Contains 2 sets of 3 non-identical chains (alpha, beta and gamma). The 2 heterotrimers are in head to head conformation with the N-termini in a small central domain. Post-translationally, conversion of fibrinogen to fibrin is triggered by thrombin, which cleaves fibrinopeptides A and B from alpha and beta chains, and thus exposes the N-terminal polymerization sites responsible for the formation of the soft clot. The soft clot is converted into the hard clot by factor XIIIA which catalyzes the epsilon-(gamma-glutamyl)lysine cross-linking between gamma chains (stronger) and between alpha chains (weaker) of different monomers.

It is found in the secreted. Functionally, fibrinogen has a double function: yielding monomers that polymerize into fibrin and acting as a cofactor in platelet aggregation. The sequence is that of Fibrinogen beta chain from Petromyzon marinus (Sea lamprey).